Here is a 351-residue protein sequence, read N- to C-terminus: Dihydroorotate dehydrogenase (quinone) (351 aa).

Residues 67–71 (AGFDK) and T91 contribute to the FMN site. Residue K71 coordinates substrate. 116-120 (NAMGF) contacts substrate. FMN contacts are provided by N145 and N178. Substrate is bound at residue N178. The active-site Nucleophile is the S181. Residue N183 coordinates substrate. FMN contacts are provided by K214 and T242. Position 243–244 (243–244 (NT)) interacts with substrate. FMN-binding positions include G262, G291, and 312–313 (YS).

This sequence belongs to the dihydroorotate dehydrogenase family. Type 2 subfamily. Monomer. FMN serves as cofactor.

Its subcellular location is the cell membrane. It carries out the reaction (S)-dihydroorotate + a quinone = orotate + a quinol. Its pathway is pyrimidine metabolism; UMP biosynthesis via de novo pathway; orotate from (S)-dihydroorotate (quinone route): step 1/1. Functionally, catalyzes the conversion of dihydroorotate to orotate with quinone as electron acceptor. The protein is Dihydroorotate dehydrogenase (quinone) of Helicobacter acinonychis (strain Sheeba).